The sequence spans 407 residues: Na(+)-translocating NADH-quinone reductase subunit F (407 aa).

Residues 3–23 traverse the membrane as a helical segment; it reads IILGVVMFTLIVLALVLVILF. Positions 32-126 constitute a 2Fe-2S ferredoxin-type domain; that stretch reads GDITISINGD…DMDIELPEEI (95 aa). [2Fe-2S] cluster contacts are provided by Cys69, Cys75, Cys78, and Cys110. Residues 129-269 enclose the FAD-binding FR-type domain; the sequence is VKKWECTVIS…SGPFGEFFAK (141 aa). Residues 272-389 are catalytic; the sequence is DAEMVFIGGG…PMMNAAVIGM (118 aa).

Belongs to the NqrF family. In terms of assembly, composed of six subunits; NqrA, NqrB, NqrC, NqrD, NqrE and NqrF. [2Fe-2S] cluster serves as cofactor. It depends on FAD as a cofactor.

The protein resides in the cell inner membrane. It carries out the reaction a ubiquinone + n Na(+)(in) + NADH + H(+) = a ubiquinol + n Na(+)(out) + NAD(+). Its function is as follows. NQR complex catalyzes the reduction of ubiquinone-1 to ubiquinol by two successive reactions, coupled with the transport of Na(+) ions from the cytoplasm to the periplasm. The first step is catalyzed by NqrF, which accepts electrons from NADH and reduces ubiquinone-1 to ubisemiquinone by a one-electron transfer pathway. The sequence is that of Na(+)-translocating NADH-quinone reductase subunit F from Vibrio vulnificus (strain CMCP6).